The primary structure comprises 692 residues: uncharacterized protein (692 aa).

2 Response regulatory domains span residues 9-130 (RVLY…LRMC) and 139-255 (RILI…EYRM). A 4-aspartylphosphate mark is found at Asp-58 and Asp-188. The GGDEF domain maps to 299–432 (GVHGLVIIDV…GGNQAHVWSA (134 aa)). Residues 443 to 691 (ESVIKRLVST…SFDFQHMSHD (249 aa)) form the EAL domain.

This is an uncharacterized protein from Thiocystis violacea.